Reading from the N-terminus, the 398-residue chain is MSNKLVLVLNCGSSSLKFAIIDALTGDDQISGLAECFGLEDAKIKWKVNGVKHDASLGAFSSHREAVEFIVKDVLGAHPEIASQIQAIGHRVVHGGEKFTQSVIIDESVVQGIEDCAALAPLHNPAHLIGIRAAQASFPQLPQVAVFDTAFHQTMPEKAFIYALPYKLYRENSIRRYGMHGTSHLFISREAAKAMGKNIEDSNIICAHLGNGASVTAIKGGKSVDTSMGMTPLEGLVMGTRCGDIDPSIIHHLVDRLGYTLDEVNNLMNKQSGLLGISELTNDCRGIEEGYSEGHKGATLALEIFCYRLAKYIASYTVPLGRLDAVVFTGGIGENSDLIRAKVLNLLEIFNFEVDDERNKAARFGNQGQITTDNGTIAMVIPTNEEWVIAEDAVRLLK.

Asparagine 10 is a Mg(2+) binding site. Lysine 17 provides a ligand contact to ATP. Residue arginine 91 participates in substrate binding. The active-site Proton donor/acceptor is aspartate 148. ATP is bound by residues 208–212 (HLGNG), 283–285 (DCR), and 331–335 (GIGEN). Glutamate 385 contacts Mg(2+).

This sequence belongs to the acetokinase family. In terms of assembly, homodimer. The cofactor is Mg(2+). Mn(2+) is required as a cofactor.

It localises to the cytoplasm. It catalyses the reaction acetate + ATP = acetyl phosphate + ADP. Its pathway is metabolic intermediate biosynthesis; acetyl-CoA biosynthesis; acetyl-CoA from acetate: step 1/2. Catalyzes the formation of acetyl phosphate from acetate and ATP. Can also catalyze the reverse reaction. The polypeptide is Acetate kinase (Shewanella woodyi (strain ATCC 51908 / MS32)).